The following is a 462-amino-acid chain: Protein phosphatase 1M (462 aa).

Residues 1-10 (MSAGWFRRRF) show a composition bias toward basic residues. The disordered stretch occupies residues 1-66 (MSAGWFRRRF…PVRSPARGRT (66 aa)). The PPM-type phosphatase domain occupies 100-452 (EFGIEEDQEW…DDVSVFVIPL (353 aa)). Mn(2+) is bound by residues Asp127 and Gly128.

The protein belongs to the PP2C family. It depends on Mg(2+) as a cofactor. Mn(2+) is required as a cofactor. In terms of tissue distribution, widely expressed with highest levels in testis and lower levels in lung, kidney and brain.

Its subcellular location is the nucleus. The enzyme catalyses O-phospho-L-seryl-[protein] + H2O = L-seryl-[protein] + phosphate. The catalysed reaction is O-phospho-L-threonyl-[protein] + H2O = L-threonyl-[protein] + phosphate. The chain is Protein phosphatase 1M from Mus musculus (Mouse).